The primary structure comprises 727 residues: Iron-sulfur clusters transporter ATM1, mitochondrial (727 aa).

The transit peptide at 1–25 directs the protein to the mitochondrion; it reads MLIGGAQNRLYQLRTSNILGLLRTR. Topologically, residues 26 to 138 are mitochondrial matrix; the sequence is SALRVGSKVE…PRGNTKVKVR (113 aa). Residues 87 to 107 form a disordered region; the sequence is KSKLPNEDTAHNASEKNSKKT. The span at 90-107 shows a compositional bias: basic and acidic residues; that stretch reads LPNEDTAHNASEKNSKKT. The chain crosses the membrane as a helical span at residues 139-160; that stretch reads VLLALALLIGAKVLNVQVPFFF. Residues 139–429 enclose the ABC transmembrane type-1 domain; the sequence is VLLALALLIG…LGSVYRELKQ (291 aa). Residues 161–183 are Mitochondrial intermembrane-facing; sequence KQIIDGMNVDWSDATVALPAALG. A helical transmembrane segment spans residues 184–207; it reads LTIMCYGLARFGAVLFGELRNAIF. The Mitochondrial matrix segment spans residues 208–256; the sequence is ARVAQNAIRNVSLQTFEHLMKLDLGWHLSRQTGGLTRAMDRGTKGISYV. A helical membrane pass occupies residues 257-280; that stretch reads LSAMVFHIIPITFEISVVCGILTY. Position 281 (Gln281) is a topological domain, mitochondrial intermembrane. A helical transmembrane segment spans residues 282–302; that stretch reads FGASFAGITFTTMLLYSIFTI. At 303 to 368 the chain is on the mitochondrial matrix side; the sequence is RTTAWRTRFR…SQVKVAQSLA (66 aa). Residues 308–312 and 371–374 each bind glutathione; these read RTRFR and NSGQ. The helical transmembrane segment at 369–387 threads the bilayer; the sequence is FLNSGQSLIFTTALTGMMY. The Mitochondrial intermembrane segment spans residues 388–402; that stretch reads MGCTGVIGGDLTVGD. A helical membrane pass occupies residues 403-424; the sequence is LVLINQLVFQLSVPLNFLGSVY. Position 421 (Gly421) interacts with glutathione. The Mitochondrial matrix portion of the chain corresponds to 425 to 727; that stretch reads RELKQSLIDM…ETLEKLNKSI (303 aa). In terms of domain architecture, ABC transporter spans 465–701; the sequence is IKFENVTFGY…ENSLYKELWR (237 aa). Residues Tyr474 and 498–509 each bind ATP; that span reads GPSGSGKSTVLK.

The protein belongs to the ABC transporter superfamily. ABCB family. Heavy Metal importer (TC 3.A.1.210) subfamily. As to quaternary structure, homodimer.

It localises to the mitochondrion inner membrane. Functionally, performs an essential function in the generation of cytoplasmic iron-sulfur proteins by mediating the ATP-dependent export of Fe/S cluster precursors synthesized by NFS1 and other mitochondrial proteins. Hydrolyzes ATP. Binds glutathione and may function by transporting a glutathione-conjugated iron-sulfur compound. In Candida glabrata (strain ATCC 2001 / BCRC 20586 / JCM 3761 / NBRC 0622 / NRRL Y-65 / CBS 138) (Yeast), this protein is Iron-sulfur clusters transporter ATM1, mitochondrial.